The primary structure comprises 288 residues: GTP-binding protein 8 (288 aa).

An EngB-type G domain is found at 109 to 282; sequence HRPEVCFIGR…RCFIADITGN (174 aa). Residues 117-124, 146-150, 164-167, 226-229, and 261-263 contribute to the GTP site; these read GRSNVGKS, GHTKK, DMPG, TKID, and VSA. Mg(2+) contacts are provided by Ser124 and Thr148.

It belongs to the TRAFAC class TrmE-Era-EngA-EngB-Septin-like GTPase superfamily. EngB GTPase family. Mg(2+) serves as cofactor.

The polypeptide is GTP-binding protein 8 (GTPBP8) (Bos taurus (Bovine)).